The sequence spans 578 residues: Arginine--tRNA ligase (578 aa).

A 'HIGH' region motif is present at residues 125-135 (PNVAKKMHVGH).

This sequence belongs to the class-I aminoacyl-tRNA synthetase family. As to quaternary structure, monomer.

The protein localises to the cytoplasm. It catalyses the reaction tRNA(Arg) + L-arginine + ATP = L-arginyl-tRNA(Arg) + AMP + diphosphate. The polypeptide is Arginine--tRNA ligase (Buchnera aphidicola subsp. Baizongia pistaciae (strain Bp)).